The following is a 603-amino-acid chain: MSFVGGGADCSANSNAIAQFNKHTQQDRSLQRQAANQQGIVQNGQGFKKDSMMNERERQNMDQFMNNGPSQSNFQFQPMRHELNMIQQNHKQPNVQNNWTNEFQTNSPSPVQRNTPLAKTGSPANAQWATEFQQPMDQTFNQSNQQQFNNMPNMRMGGYRPMMGMSMMGGGMHQQQNQMQHQEQNQDHQVDWDNQFKEIEQLTNETKDAEAEQVKGEEEPEIVIDDKYQATFQEVWDSLNSEEVENDFINQQYEEFKNTQRDSMPADMAQWEKDFAKYASTRAHFGDYQFEDNQHNQFLDLPKESDPYEIGLQLMENGAKLSEAALAFEAAIQRNEGHINAWLKLGEVQTQNEKEIAGISALEKCLELHPENSEALMTLAISYINEGYDNAAFATLERWISTKYPQVADQARQQNPAIDDEDRFSLNKRVTELFLNAAQLSPNSANMDPDVQMGLGVLFYANEDFDKTIDCFKAALSIKPDDAVLWNRLGASLANSNRSEEAVDAYFKALELKPTFVRARYNLGVSCINIGCYKEAAEHLLSGLSMHQVEGVQTDASSTLNHNQSTSLTETLKRAFIALDRRDLLEKVKPDMDINQFRGEFSF.

Cys-10 is covalently cross-linked (Glycyl cysteine thioester (Cys-Gly) (interchain with G-Cter in ubiquitin)). The interval 11–33 (SANSNAIAQFNKHTQQDRSLQRQ) is amphipathic helix 1 (AH1). Lys-22 is covalently cross-linked (Glycyl lysine isopeptide (Lys-Gly) (interchain with G-Cter in ubiquitin)). The tract at residues 23 to 49 (HTQQDRSLQRQAANQQGIVQNGQGFKK) is disordered. Residues 31–45 (QRQAANQQGIVQNGQ) show a composition bias toward polar residues. The tract at residues 58–76 (RQNMDQFMNNGPSQSNFQF) is amphipathic helix 2 (AH2). 3 short sequence motifs (wxxxF/Y motif) span residues 99-103 (WTNEF), 128-132 (WATEF), and 192-196 (WDNQF). Positions 232 to 248 (FQEVWDSLNSEEVENDF) are amphipathic helix 4 (AH4). Positions 271 to 275 (WEKDF) match the WxxxF/Y motif 4 motif. TPR repeat units follow at residues 304–338 (ESDPYEIGLQLMENGAKLSEAALAFEAAIQRNEGH), 339–372 (INAWLKLGEVQTQNEKEIAGISALEKCLELHPEN), 449–482 (PDVQMGLGVLFYANEDFDKTIDCFKAALSIKPDD), 484–516 (VLWNRLGASLANSNRSEEAVDAYFKALELKPTF), and 518–550 (RARYNLGVSCINIGCYKEAAEHLLSGLSMHQVE).

It belongs to the peroxisomal targeting signal receptor family. Interacts (via WxxxF/Y and LVxEF motifs) with PEX14; promoting translocation through the PEX13-PEX14 docking complex. Post-translationally, monoubiquitinated at Cys-10 by PEX2 during PEX5 passage through the retrotranslocation channel: monoubiquitination acts as a signal for PEX5 extraction and is required for proper export from peroxisomes and recycling. When PEX5 recycling is compromised, polyubiquitinated at Lys-22 by PEX10 during its passage through the retrotranslocation channel, leading to its degradation.

Its subcellular location is the cytoplasm. It localises to the cytosol. It is found in the peroxisome matrix. Receptor that mediates peroxisomal import of proteins containing a C-terminal PTS1-type tripeptide peroxisomal targeting signal (SKL-type). Binds to cargo proteins containing a PTS1 peroxisomal targeting signal in the cytosol, and translocates them into the peroxisome matrix by passing through the PEX13-PEX14 docking complex along with cargo proteins. PEX5 receptor is then retrotranslocated into the cytosol, leading to release of bound cargo in the peroxisome matrix, and reset for a subsequent peroxisome import cycle. This is Peroxisomal targeting signal receptor (PEX5) from Debaryomyces hansenii (strain ATCC 36239 / CBS 767 / BCRC 21394 / JCM 1990 / NBRC 0083 / IGC 2968) (Yeast).